We begin with the raw amino-acid sequence, 383 residues long: 4-hydroxy-3-methylbut-2-en-1-yl diphosphate synthase (flavodoxin) (383 aa).

Positions 277, 280, 312, and 319 each coordinate [4Fe-4S] cluster.

The protein belongs to the IspG family. Requires [4Fe-4S] cluster as cofactor.

The catalysed reaction is (2E)-4-hydroxy-3-methylbut-2-enyl diphosphate + oxidized [flavodoxin] + H2O + 2 H(+) = 2-C-methyl-D-erythritol 2,4-cyclic diphosphate + reduced [flavodoxin]. It functions in the pathway isoprenoid biosynthesis; isopentenyl diphosphate biosynthesis via DXP pathway; isopentenyl diphosphate from 1-deoxy-D-xylulose 5-phosphate: step 5/6. In terms of biological role, converts 2C-methyl-D-erythritol 2,4-cyclodiphosphate (ME-2,4cPP) into 1-hydroxy-2-methyl-2-(E)-butenyl 4-diphosphate. The chain is 4-hydroxy-3-methylbut-2-en-1-yl diphosphate synthase (flavodoxin) from Caulobacter vibrioides (strain ATCC 19089 / CIP 103742 / CB 15) (Caulobacter crescentus).